Consider the following 634-residue polypeptide: DNA-directed RNA polymerase subunit gamma (634 aa).

Cys74, Cys76, Cys89, and Cys92 together coordinate Zn(2+). Positions 471, 473, and 475 each coordinate Mg(2+).

Belongs to the RNA polymerase beta' chain family. RpoC1 subfamily. As to quaternary structure, in cyanobacteria the RNAP catalytic core is composed of 2 alpha, 1 beta, 1 beta', 1 gamma and 1 omega subunit. When a sigma factor is associated with the core the holoenzyme is formed, which can initiate transcription. Requires Mg(2+) as cofactor. Zn(2+) is required as a cofactor.

It catalyses the reaction RNA(n) + a ribonucleoside 5'-triphosphate = RNA(n+1) + diphosphate. Functionally, DNA-dependent RNA polymerase catalyzes the transcription of DNA into RNA using the four ribonucleoside triphosphates as substrates. The chain is DNA-directed RNA polymerase subunit gamma from Prochlorococcus marinus (strain MIT 9313).